A 281-amino-acid polypeptide reads, in one-letter code: Putative glutamine amidotransferase-like protein RP404 (281 aa).

Residues lysine 19 to isoleucine 281 enclose the Glutamine amidotransferase type-1 domain. Residues arginine 139–proline 174 enclose the RPE1 insert domain.

The polypeptide is Putative glutamine amidotransferase-like protein RP404 (Rickettsia prowazekii (strain Madrid E)).